A 185-amino-acid polypeptide reads, in one-letter code: Casparian strip membrane protein 1 (185 aa).

Over Met1 to Arg32 the chain is Cytoplasmic. A helical transmembrane segment spans residues Ile33–Leu53. Residues Ser54 to Lys73 lie on the Extracellular side of the membrane. Residues Phe74–Ile94 traverse the membrane as a helical segment. The Cytoplasmic portion of the chain corresponds to Phe95–Arg106. A helical transmembrane segment spans residues Val107–Ala127. The Extracellular portion of the chain corresponds to Ala128–Ser160. N-linked (GlcNAc...) asparagine glycosylation occurs at Asn138. The helical transmembrane segment at Leu161 to Ala181 threads the bilayer. At Leu182–Arg185 the chain is on the cytoplasmic side.

It belongs to the Casparian strip membrane proteins (CASP) family. As to quaternary structure, homodimer and heterodimers.

It localises to the cell membrane. In terms of biological role, regulates membrane-cell wall junctions and localized cell wall deposition. Required for establishment of the Casparian strip membrane domain (CSD) and the subsequent formation of Casparian strips, a cell wall modification of the root endodermis that determines an apoplastic barrier between the intraorganismal apoplasm and the extraorganismal apoplasm and prevents lateral diffusion. This Solanum demissum (Wild potato) protein is Casparian strip membrane protein 1.